A 201-amino-acid chain; its full sequence is Large ribosomal subunit protein uL4 (201 aa).

Residues 45 to 71 (AQKTRAEVTGSGKKPWRQKGTGRARAG) form a disordered region.

It belongs to the universal ribosomal protein uL4 family. As to quaternary structure, part of the 50S ribosomal subunit.

One of the primary rRNA binding proteins, this protein initially binds near the 5'-end of the 23S rRNA. It is important during the early stages of 50S assembly. It makes multiple contacts with different domains of the 23S rRNA in the assembled 50S subunit and ribosome. Functionally, forms part of the polypeptide exit tunnel. This chain is Large ribosomal subunit protein uL4, found in Shewanella sp. (strain MR-4).